Consider the following 231-residue polypeptide: Uracil phosphoribosyltransferase (231 aa).

38-42 provides a ligand contact to GTP; that stretch reads KGLVR. Residues Arg87, Arg112, and 140-148 contribute to the 5-phospho-alpha-D-ribose 1-diphosphate site; that span reads DPMIATGST. Uracil contacts are provided by residues Ile203 and 208 to 210; that span reads GDA. Asp209 contacts 5-phospho-alpha-D-ribose 1-diphosphate.

It belongs to the UPRTase family. It depends on Mg(2+) as a cofactor.

It carries out the reaction UMP + diphosphate = 5-phospho-alpha-D-ribose 1-diphosphate + uracil. It participates in pyrimidine metabolism; UMP biosynthesis via salvage pathway; UMP from uracil: step 1/1. With respect to regulation, allosterically activated by GTP. Catalyzes the conversion of uracil and 5-phospho-alpha-D-ribose 1-diphosphate (PRPP) to UMP and diphosphate. The protein is Uracil phosphoribosyltransferase of Methanococcus maripaludis (strain DSM 14266 / JCM 13030 / NBRC 101832 / S2 / LL).